A 221-amino-acid chain; its full sequence is ATP phosphoribosyltransferase (221 aa).

It belongs to the ATP phosphoribosyltransferase family. Short subfamily. Heteromultimer composed of HisG and HisZ subunits.

The protein localises to the cytoplasm. It catalyses the reaction 1-(5-phospho-beta-D-ribosyl)-ATP + diphosphate = 5-phospho-alpha-D-ribose 1-diphosphate + ATP. It participates in amino-acid biosynthesis; L-histidine biosynthesis; L-histidine from 5-phospho-alpha-D-ribose 1-diphosphate: step 1/9. Its function is as follows. Catalyzes the condensation of ATP and 5-phosphoribose 1-diphosphate to form N'-(5'-phosphoribosyl)-ATP (PR-ATP). Has a crucial role in the pathway because the rate of histidine biosynthesis seems to be controlled primarily by regulation of HisG enzymatic activity. This chain is ATP phosphoribosyltransferase, found in Anaeromyxobacter dehalogenans (strain 2CP-1 / ATCC BAA-258).